We begin with the raw amino-acid sequence, 823 residues long: Bifunctional enzyme flvA (823 aa).

The pyridoxal 5'-phosphate-dependent lyase stretch occupies residues 56–535 (TAKFEMALMP…QRLYDAKFYI (480 aa)). At K331 the chain carries N6-(pyridoxal phosphate)lysine. The interval 573-823 (DFDALQQVSH…TLPMNVPLWL (251 aa)) is alpha-ketoglutarate-dependent oxygenase. Fe cation-binding residues include H703 and D705.

It in the N-terminal section; belongs to the trans-sulfuration enzymes family. In the C-terminal section; belongs to the iron/ascorbate-dependent oxidoreductase family. It depends on pyridoxal 5'-phosphate as a cofactor. Fe(2+) is required as a cofactor.

The catalysed reaction is O-acetyl-L-homoserine + 3-methyl-2-oxobutanoate = (6S)-6-amino-3,3-dimethyl-2-oxoheptanedioate + acetate + H(+). It catalyses the reaction (6S)-3,3-dimethylpiperidine-2,6-dicarboxylate + 2-oxoglutarate + AH2 + O2 + H(+) = (2S)-5,5-dimethylpiperidine-2-carboxylate + succinate + A + 2 CO2 + H2O. It functions in the pathway secondary metabolite biosynthesis; terpenoid biosynthesis. In terms of biological role, bifunctional enzyme; part of the gene cluster that mediates the biosynthesis of flavunoidine, an alkaloidal terpenoid with a tetracyclic cage-like core connected to dimethylcadaverine via a C-N bond and acylated with 5,5-dimethyl-L-pipecolate. The tetracyclic core is synthesized by the terpene cyclase flvE and the cytochrome P450 monooxygenase flvD. The terpene cyclase flvE catalyzes the cyclization of farnesyl pyrophosphate (FPP) to form (1R,4R,5S)-(+)-acoradiene and the cytochrome P450 monooxygenase flvD is then responsible for oxidative conversion of (1R,4R,5S)-(+)-acoradiene into the tetracyclic cage present in the final product flavunoidine. In parallel, the N-methyltransferase flvH dimethylates L-lysine to give N,N-dimethyl-L-Lysin which is decarboxylated by flvG to afford dimethylcadaverine. The terpene cyclase-like protein flvF is the enzyme that attaches the dimethylcadaverine precusor at the C-7 of the tetracyclic cage to yield pre-flavunoidine. The cytochrome monooxygenase flvC hydroxylates the C-10 position of pre-flavunoidine whereas the NRPS flvI acylates the terpenoid core at the hydroxylated C-10 with dimethylpipecolate to yield final flavunoidine. The bifunctional enzyme flvA and the dehydrogenase flvB are responsible for the synthesis of the dimethylpipecolate precursor. The PLP-dependent lyase domain of flvA might use L-O-acetyl-homoserine and alpha-keto-isovalerate to form an intermediary ketone that can cyclize intramolecularly to yield an imine. The imine can be reduced by flvB to yield the 6-carboxylated pipecolate. The C-terminal alpha-KG-dependent oxygenase domain of flvA is then proposed to catalyze the decarboxylation to yield dimethylpipecolate. The polypeptide is Bifunctional enzyme flvA (Aspergillus flavus (strain ATCC 200026 / FGSC A1120 / IAM 13836 / NRRL 3357 / JCM 12722 / SRRC 167)).